The primary structure comprises 282 residues: Endonuclease V (282 aa).

Asp52 and Asp126 together coordinate Mg(2+). The interval 250–282 (SLGLPGPPTPRSPKAQRPVACPKGDSGESSALC) is disordered.

It belongs to the endonuclease V family. As to quaternary structure, monomer. Interacts with PABPC1; the interaction is RNA-dependent and stimulates ENDOV activity. It depends on Mg(2+) as a cofactor.

The protein resides in the cytoplasm. The protein localises to the nucleus. It is found in the nucleolus. Its subcellular location is the stress granule. Inhibited by normal intracellular concentrations of ATP. Functionally, endoribonuclease that specifically cleaves inosine-containing RNAs: cleaves RNA at the second phosphodiester bond 3' to inosine. Active against both single-stranded and double-stranded RNAs. Has strong preference for single-stranded RNAs (ssRNAs) toward double-stranded RNAs (dsRNAs). Cleaves mRNAs and tRNAs containing inosine. Also able to cleave structure-specific dsRNA substrates containing the specific sites 5'-IIUI-3' and 5'-UIUU-3'. Inosine is present in a number of RNAs following editing; the function of inosine-specific endoribonuclease is still unclear: it could either play a regulatory role in edited RNAs, or be involved in antiviral response by removing the hyperedited long viral dsRNA genome that has undergone A-to-I editing. Binds branched DNA structures. In terms of biological role, endoribonuclease that specifically cleaves inosine-containing RNAs: cleaves RNA at the second phosphodiester bond 3' to inosine. Active against both single-stranded and double-stranded RNAs. Cleaves tRNAs containing inosine. This is Endonuclease V (ENDOV) from Homo sapiens (Human).